The primary structure comprises 654 residues: Probable Xaa-Pro aminopeptidase P (654 aa).

Mn(2+) contacts are provided by D449, D460, E558, and E572.

Belongs to the peptidase M24B family. Requires Mn(2+) as cofactor.

The enzyme catalyses Release of any N-terminal amino acid, including proline, that is linked to proline, even from a dipeptide or tripeptide.. Catalyzes the removal of a penultimate prolyl residue from the N-termini of peptides. This chain is Probable Xaa-Pro aminopeptidase P (ampp), found in Aspergillus flavus (strain ATCC 200026 / FGSC A1120 / IAM 13836 / NRRL 3357 / JCM 12722 / SRRC 167).